The sequence spans 120 residues: Large ribosomal subunit protein uL18 (120 aa).

Residues 1-22 (MITKTSKNAARQKRHARVRAKL) form a disordered region. Residues 10 to 20 (ARQKRHARVRA) are compositionally biased toward basic residues.

It belongs to the universal ribosomal protein uL18 family. Part of the 50S ribosomal subunit; part of the 5S rRNA/L5/L18/L25 subcomplex. Contacts the 5S and 23S rRNAs.

In terms of biological role, this is one of the proteins that bind and probably mediate the attachment of the 5S RNA into the large ribosomal subunit, where it forms part of the central protuberance. In Bacillus velezensis (strain DSM 23117 / BGSC 10A6 / LMG 26770 / FZB42) (Bacillus amyloliquefaciens subsp. plantarum), this protein is Large ribosomal subunit protein uL18.